The chain runs to 148 residues: Large ribosomal subunit protein uL15 (148 aa).

The segment covering 1–30 (MPSRLRKTRKLRGHVSHGHGRIGKHRKHPG) has biased composition (basic residues). Residues 1 to 37 (MPSRLRKTRKLRGHVSHGHGRIGKHRKHPGGRGNAGG) form a disordered region. Position 39 is a (3S)-3-hydroxyhistidine (histidine 39). 2 positions are modified to N6-acetyllysine: lysine 47 and lysine 55. Serine 68 is modified (phosphoserine). The residue at position 110 (lysine 110) is an N6-acetyllysine.

This sequence belongs to the universal ribosomal protein uL15 family. As to quaternary structure, component of the large ribosomal subunit. Post-translationally, hydroxylated on His-39 by MINA.

The protein resides in the cytoplasm. Its function is as follows. Component of the large ribosomal subunit. The ribosome is a large ribonucleoprotein complex responsible for the synthesis of proteins in the cell. This chain is Large ribosomal subunit protein uL15 (Rpl27a), found in Mus musculus (Mouse).